The primary structure comprises 250 residues: Oil body-associated protein 2B (250 aa).

A disordered region spans residues 1–29 (MSSSDQNPAATPASSGPAEPSPPGRPTAV). Residues 8–18 (PAATPASSGPA) are compositionally biased toward low complexity.

Belongs to the OBAP family.

The protein is Oil body-associated protein 2B of Zea mays (Maize).